Consider the following 122-residue polypeptide: Large ribosomal subunit protein uL14 (122 aa).

Belongs to the universal ribosomal protein uL14 family. In terms of assembly, part of the 50S ribosomal subunit. Forms a cluster with proteins L3 and L19. In the 70S ribosome, L14 and L19 interact and together make contacts with the 16S rRNA in bridges B5 and B8.

Its function is as follows. Binds to 23S rRNA. Forms part of two intersubunit bridges in the 70S ribosome. This chain is Large ribosomal subunit protein uL14, found in Streptococcus pyogenes serotype M2 (strain MGAS10270).